The chain runs to 189 residues: Probable nicotinate-nucleotide adenylyltransferase (189 aa).

It belongs to the NadD family.

It carries out the reaction nicotinate beta-D-ribonucleotide + ATP + H(+) = deamido-NAD(+) + diphosphate. It participates in cofactor biosynthesis; NAD(+) biosynthesis; deamido-NAD(+) from nicotinate D-ribonucleotide: step 1/1. Functionally, catalyzes the reversible adenylation of nicotinate mononucleotide (NaMN) to nicotinic acid adenine dinucleotide (NaAD). The chain is Probable nicotinate-nucleotide adenylyltransferase from Staphylococcus aureus (strain MRSA252).